A 179-amino-acid polypeptide reads, in one-letter code: Shikimate kinase (179 aa).

15–20 (GAGKTS) contacts ATP. Thr-19 is a binding site for Mg(2+). Substrate contacts are provided by Asp-37, Arg-61, and Gly-83. Residue Arg-123 coordinates ATP. Residue Arg-142 participates in substrate binding.

Belongs to the shikimate kinase family. Monomer. Mg(2+) is required as a cofactor.

The protein localises to the cytoplasm. It catalyses the reaction shikimate + ATP = 3-phosphoshikimate + ADP + H(+). The protein operates within metabolic intermediate biosynthesis; chorismate biosynthesis; chorismate from D-erythrose 4-phosphate and phosphoenolpyruvate: step 5/7. In terms of biological role, catalyzes the specific phosphorylation of the 3-hydroxyl group of shikimic acid using ATP as a cosubstrate. The polypeptide is Shikimate kinase (Coxiella burnetii (strain CbuG_Q212) (Coxiella burnetii (strain Q212))).